The following is a 389-amino-acid chain: Alpha-2B adrenergic receptor (389 aa).

The chain crosses the membrane as a helical span at residues 1 to 25; it reads AIAAVITFLILFTIFGNALVILAVL. Residues 26-36 are Cytoplasmic-facing; sequence TSRSLRAPQNL. The helical transmembrane segment at 37–62 threads the bilayer; that stretch reads FLVSLAAADILVATLIIPFSLANELL. Residues 63 to 72 are Extracellular-facing; sequence GYWYFRRTWC. Cys72 and Cys151 are disulfide-bonded. Residues 73–95 form a helical membrane-spanning segment; the sequence is EVYLALDVLFCTSSIVHLCAISL. Over 96–117 the chain is Cytoplasmic; the sequence is DRYWAVTRALEYNTKRTPRRIK. Residues 118 to 140 form a helical membrane-spanning segment; it reads CIILTVWLIAAVISLPPLIYKGD. At 141–156 the chain is on the extracellular side; that stretch reads QGPQPRGRPQCKLNQE. The chain crosses the membrane as a helical span at residues 157–180; that stretch reads AWYILASSIGSFFAPCLIMILVYL. Residues 181–363 lie on the Cytoplasmic side of the membrane; sequence RIYLIAKRSH…LTREKRFTFV (183 aa). Disordered stretches follow at residues 194–216 and 233–320; these read PRAK…AGAS and EANG…PLQQ. Residues 196–205 are compositionally biased toward gly residues; that stretch reads AKGGPGGGGS. The segment covering 255–267 has biased composition (low complexity); that stretch reads PALPSSWPALPSS. A compositionally biased stretch (acidic residues) spans 280 to 302; it reads LEEEAEEEEEEEEEEEEGEEECE. Residues 303–320 show a composition bias toward low complexity; that stretch reads PQALPASPASACSPPLQQ. The chain crosses the membrane as a helical span at residues 364 to 387; the sequence is LAVVIGVFVLCWFPFFFSYSLGAI. The Extracellular portion of the chain corresponds to 388–389; it reads CP.

Belongs to the G-protein coupled receptor 1 family. Adrenergic receptor subfamily. ADRA2B sub-subfamily. Interacts with RAB26. Interacts with PPP1R9B. Interacts with GGA1, GGA2 and GGA3.

The protein localises to the cell membrane. Alpha-2 adrenergic receptors mediate the catecholamine-induced inhibition of adenylate cyclase through the action of G proteins. The sequence is that of Alpha-2B adrenergic receptor (ADRA2B) from Equus caballus (Horse).